The primary structure comprises 228 residues: MKQGGSDAAKQAAGESAAEAVEDATVVGLGTGSTAAYAIRAIGQAVDAGLDVVGVPTSFQSRQLARDCGIPLADLDDVSVDLAIDGADEVASGNLIKGGGAAHAREKIVDASADRFLVVADPTKEAAVLSYPVPVEVLPMARSTVVTAVEELGGDPTLRRAERKDGPVVTDNGNLVLDCDFNSIHDPAALASDLAALPGVVEHGLFVGMADEIHVGTADGVTVRTLSK.

Substrate-binding positions include threonine 31–threonine 34, aspartate 85–aspartate 88, and lysine 97–glycine 100. Catalysis depends on glutamate 106, which acts as the Proton acceptor. Lysine 124 lines the substrate pocket.

Belongs to the ribose 5-phosphate isomerase family. In terms of assembly, homodimer.

The catalysed reaction is aldehydo-D-ribose 5-phosphate = D-ribulose 5-phosphate. Its pathway is carbohydrate degradation; pentose phosphate pathway; D-ribose 5-phosphate from D-ribulose 5-phosphate (non-oxidative stage): step 1/1. Functionally, catalyzes the reversible conversion of ribose-5-phosphate to ribulose 5-phosphate. This chain is Ribose-5-phosphate isomerase A, found in Haloarcula marismortui (strain ATCC 43049 / DSM 3752 / JCM 8966 / VKM B-1809) (Halobacterium marismortui).